The primary structure comprises 372 residues: MHNQAPIQRRKSTRIYVGNVPIGDGAPIAVQSMTNTRTTDVEATVNQIKALERVGADIVRVSVPTMDAAEAFKLIKQQVNVPLVADIHFDYRIALKVAEYGVDCLRINPGNIGNEERIRMVVDCARDKNIPIRIGVNAGSLEKDLQEKYGEPTPQALLESAMRHVDHLDRLNFDQFKVSVKASDVFLAVESYRLLAKQIDQPLHLGITEAGGARSGAVKSAIGLGLLLSEGIGDTLRVSLAADPVEEIKVGFDILKSLRIRSRGINFIACPTCSRQEFDVIGTVNALEQRLEDIITSMDVSIIGCVVNGPGEALVSTLGVTGGNKKSGLYEDGVRKDRLDNNDMIDQLEARIRAKASQLDEARRIDVQQVEK.

Positions 270, 273, 305, and 312 each coordinate [4Fe-4S] cluster.

This sequence belongs to the IspG family. The cofactor is [4Fe-4S] cluster.

It carries out the reaction (2E)-4-hydroxy-3-methylbut-2-enyl diphosphate + oxidized [flavodoxin] + H2O + 2 H(+) = 2-C-methyl-D-erythritol 2,4-cyclic diphosphate + reduced [flavodoxin]. The protein operates within isoprenoid biosynthesis; isopentenyl diphosphate biosynthesis via DXP pathway; isopentenyl diphosphate from 1-deoxy-D-xylulose 5-phosphate: step 5/6. Converts 2C-methyl-D-erythritol 2,4-cyclodiphosphate (ME-2,4cPP) into 1-hydroxy-2-methyl-2-(E)-butenyl 4-diphosphate. This Escherichia coli O8 (strain IAI1) protein is 4-hydroxy-3-methylbut-2-en-1-yl diphosphate synthase (flavodoxin).